Reading from the N-terminus, the 569-residue chain is Interleukin-1 receptor type 1 (569 aa).

The signal sequence occupies residues 1–17 (MKVLLRLICFIALLISS). The Extracellular portion of the chain corresponds to 18 to 336 (LEADKCKERE…LIYPVTNFQK (319 aa)). Cystine bridges form between Cys-23–Cys-104, Cys-44–Cys-96, Cys-121–Cys-164, and Cys-142–Cys-196. 3 consecutive Ig-like C2-type domains span residues 23–110 (CKER…IKIS), 118–210 (PNLC…YPIT), and 226–328 (PVIV…IQLI). Asn-100 carries an N-linked (GlcNAc...) asparagine glycan. 5 N-linked (GlcNAc...) asparagine glycosylation sites follow: Asn-193, Asn-233, Asn-249, Asn-263, and Asn-297. Cys-248 and Cys-312 are joined by a disulfide. Residues 337–356 (HMIGICVTLTVIIVCSVFIY) form a helical membrane-spanning segment. Over 357 to 569 (KIFKIDIVLW…LQREAHVPLG (213 aa)) the chain is Cytoplasmic. The region spanning 383-538 (KTYDAYILYP…RFWKNVRYHM (156 aa)) is the TIR domain. Glu-470 is a catalytic residue. Phosphotyrosine is present on Tyr-496. The tract at residues 540-569 (VQRRSPSSKHQLLSPATKEKLQREAHVPLG) is disordered. Residues 556–569 (TKEKLQREAHVPLG) are compositionally biased toward basic and acidic residues.

This sequence belongs to the interleukin-1 receptor family. As to quaternary structure, the interleukin-1 receptor complex is a heterodimer of IL1R1 and IL1RAP. Interacts with PIK3R1. Interacts with IL1A. A soluble form (sIL1R1) is probably produced by proteolytic cleavage at the cell surface (shedding). In terms of processing, rapidly phosphorylated on Tyr-496 in response to IL-1, which creates a SH2 binding site for the PI 3-kinase regulatory subunit PIK3R1. Expressed in T-helper cell subsets. Preferentially expressed in T-helper 1 (Th1) cells.

Its subcellular location is the membrane. It is found in the cell membrane. The protein resides in the secreted. It carries out the reaction NAD(+) + H2O = ADP-D-ribose + nicotinamide + H(+). Its function is as follows. Receptor for IL1A, IL1B and IL1RN. After binding to interleukin-1 associates with the coreceptor IL1RAP to form the high affinity interleukin-1 receptor complex which mediates interleukin-1-dependent activation of NF-kappa-B, MAPK and other pathways. Signaling involves the recruitment of adapter molecules such as TOLLIP, MYD88, and IRAK1 or IRAK2 via the respective TIR domains of the receptor/coreceptor subunits. Binds ligands with comparable affinity and binding of antagonist IL1RN prevents association with IL1RAP to form a signaling complex. Involved in IL1B-mediated costimulation of IFNG production from T-helper 1 (Th1) cells. The polypeptide is Interleukin-1 receptor type 1 (IL1R1) (Homo sapiens (Human)).